An 88-amino-acid polypeptide reads, in one-letter code: UPF0250 protein IL0958 (88 aa).

This sequence belongs to the UPF0250 family.

This chain is UPF0250 protein IL0958, found in Idiomarina loihiensis (strain ATCC BAA-735 / DSM 15497 / L2-TR).